The primary structure comprises 302 residues: Sulfate adenylyltransferase subunit 2 (302 aa).

The protein belongs to the PAPS reductase family. CysD subfamily. Heterodimer composed of CysD, the smaller subunit, and CysN.

It catalyses the reaction sulfate + ATP + H(+) = adenosine 5'-phosphosulfate + diphosphate. It participates in sulfur metabolism; hydrogen sulfide biosynthesis; sulfite from sulfate: step 1/3. With CysN forms the ATP sulfurylase (ATPS) that catalyzes the adenylation of sulfate producing adenosine 5'-phosphosulfate (APS) and diphosphate, the first enzymatic step in sulfur assimilation pathway. APS synthesis involves the formation of a high-energy phosphoric-sulfuric acid anhydride bond driven by GTP hydrolysis by CysN coupled to ATP hydrolysis by CysD. This is Sulfate adenylyltransferase subunit 2 from Pectobacterium carotovorum subsp. carotovorum (strain PC1).